We begin with the raw amino-acid sequence, 218 residues long: Zinc metalloproteinase-disintegrin-like bothrojarin-2 (218 aa).

A Disintegrin domain is found at 14-100 (PPVCGNELLE…QCPTDDFHKN (87 aa)). Positions 16, 21, 23, 26, and 29 each coordinate Ca(2+). 10 disulfides stabilise this stretch: Cys-28–Cys-46, Cys-30–Cys-41, Cys-40–Cys-63, Cys-54–Cys-60, Cys-59–Cys-85, Cys-72–Cys-92, Cys-79–Cys-111, Cys-104–Cys-116, Cys-123–Cys-173, and Cys-151–Cys-161. The D/ECD-tripeptide motif lies at 78 to 80 (ECD).

The protein belongs to the venom metalloproteinase (M12B) family. P-III subfamily. P-IIIa sub-subfamily. In terms of assembly, monomer. Zn(2+) serves as cofactor. In terms of processing, glycosylated. As to expression, expressed by the venom gland.

The protein resides in the secreted. In terms of biological role, the hemorrhagic metalloproteinase-disintegrin-like bothrojarin-1 is a potent inhibitor of collagen-induced platelet aggregation by blockage of alpha-2/beta-1 (ITGA2/ITGB1) integrin. It does not present any fibrinogen-clotting activity. This chain is Zinc metalloproteinase-disintegrin-like bothrojarin-2, found in Bothrops jararaca (Jararaca).